The following is a 2194-amino-acid chain: Genome polyprotein (2194 aa).

A lipid anchor (N-myristoyl glycine; by host) is attached at Gly2. The Cytoplasmic segment spans residues Gly2–Gln1504. The segment at Leu566–Val582 is amphipathic alpha-helix. Residues His881 and Asp899 each act as for protease 2A activity in the active site. Zn(2+) contacts are provided by Cys916 and Cys918. Catalysis depends on Cys970, which acts as the For protease 2A activity. Residues Cys976 and His978 each contribute to the Zn(2+) site. Residues Asn1110 to Gln1182 form a membrane-binding region. Positions Asn1110–Thr1248 are oligomerization. An RNA-binding region spans residues Ala1131–Gln1135. In terms of domain architecture, SF3 helicase spans Glu1214–Asn1370. Zn(2+)-binding residues include Cys1378, Cys1390, and Cys1395. Residues Cys1378 to Cys1395 form a C4-type; degenerate zinc finger. The interval Glu1422–Val1429 is RNA-binding. The interval Leu1433–Gln1438 is oligomerization. The stretch at Ala1505–Tyr1520 is an intramembrane region. Over Lys1521–Phe2194 the chain is Cytoplasmic. Position 1530 is an O-(5'-phospho-RNA)-tyrosine (Tyr1530). The Peptidase C3 domain occupies Gly1550–Phe1728. Catalysis depends on for protease 3C activity residues His1589, Glu1620, and Cys1696. Residues Gly1959 to Leu2075 form the RdRp catalytic domain. The Mg(2+) site is built by Asp1965 and Asp2061.

It belongs to the picornaviruses polyprotein family. As to quaternary structure, interacts with capsid protein VP1 and capsid protein VP3 to form heterotrimeric protomers. In terms of assembly, interacts with capsid protein VP0, and capsid protein VP3 to form heterotrimeric protomers. Five protomers subsequently associate to form pentamers which serve as building blocks for the capsid. Interacts with capsid protein VP2, capsid protein VP3 and capsid protein VP4 following cleavage of capsid protein VP0. Interacts with capsid protein VP1 and capsid protein VP3 in the mature capsid. As to quaternary structure, interacts with capsid protein VP0 and capsid protein VP1 to form heterotrimeric protomers. Five protomers subsequently associate to form pentamers which serve as building blocks for the capsid. Interacts with capsid protein VP4 in the mature capsid. Interacts with protein 2C; this interaction may be important for virion morphogenesis. In terms of assembly, interacts with capsid protein VP1 and capsid protein VP3. Homodimer. As to quaternary structure, homohexamer; forms a hexameric ring structure with 6-fold symmetry characteristic of AAA+ ATPases. Interacts (via N-terminus) with host RTN3 (via reticulon domain); this interaction is important for viral replication. Interacts with capsid protein VP3; this interaction may be important for virion morphogenesis. In terms of assembly, interacts with protein 3CD. Homodimer. Interacts with host GBF1. Interacts (via GOLD domain) with host ACBD3 (via GOLD domain); this interaction allows the formation of a viral protein 3A/ACBD3 heterotetramer with a 2:2 stoichiometry, which will stimulate the recruitment of host PI4KB in order to synthesize PI4P at the viral RNA replication sites. As to quaternary structure, interacts with RNA-directed RNA polymerase. In terms of assembly, interacts with protein 3AB and with RNA-directed RNA polymerase. Interacts with Viral protein genome-linked and with protein 3CD. The cofactor is Mg(2+). Specific enzymatic cleavages in vivo by the viral proteases yield processing intermediates and the mature proteins. In terms of processing, myristoylation is required for the formation of pentamers during virus assembly. Further assembly of 12 pentamers and a molecule of genomic RNA generates the provirion. Post-translationally, during virion maturation, immature virions are rendered infectious following cleavage of VP0 into VP4 and VP2. This maturation seems to be an autocatalytic event triggered by the presence of RNA in the capsid and it is followed by a conformational change infectious virion. Myristoylation is required during RNA encapsidation and formation of the mature virus particle. In terms of processing, VPg is uridylylated by the polymerase into VPg-pUpU. This acts as a nucleotide-peptide primer for the genomic RNA replication.

Its subcellular location is the virion. It localises to the host cytoplasm. The protein resides in the host cytoplasmic vesicle membrane. It is found in the host nucleus. The catalysed reaction is a ribonucleoside 5'-triphosphate + H2O = a ribonucleoside 5'-diphosphate + phosphate + H(+). The enzyme catalyses Selective cleavage of Tyr-|-Gly bond in the picornavirus polyprotein.. It catalyses the reaction RNA(n) + a ribonucleoside 5'-triphosphate = RNA(n+1) + diphosphate. It carries out the reaction Selective cleavage of Gln-|-Gly bond in the poliovirus polyprotein. In other picornavirus reactions Glu may be substituted for Gln, and Ser or Thr for Gly.. Replication or transcription is subject to high level of random mutations by the nucleotide analog ribavirin. Its function is as follows. Forms an icosahedral capsid of pseudo T=3 symmetry with capsid proteins VP2 and VP3. The capsid is 300 Angstroms in diameter, composed of 60 copies of each capsid protein and enclosing the viral positive strand RNA genome. Capsid protein VP1 mainly forms the vertices of the capsid. Capsid protein VP1 interacts with host cell receptor to provide virion attachment to target host cells. This attachment induces virion internalization. Tyrosine kinases are probably involved in the entry process. After binding to its receptor, the capsid undergoes conformational changes. Capsid protein VP1 N-terminus (that contains an amphipathic alpha-helix) and capsid protein VP4 are externalized. Together, they shape a pore in the host membrane through which viral genome is translocated to host cell cytoplasm. Forms an icosahedral capsid of pseudo T=3 symmetry with capsid proteins VP2 and VP3. The capsid is 300 Angstroms in diameter, composed of 60 copies of each capsid protein and enclosing the viral positive strand RNA genome. Functionally, lies on the inner surface of the capsid shell. After binding to the host receptor, the capsid undergoes conformational changes. Capsid protein VP4 is released, Capsid protein VP1 N-terminus is externalized, and together, they shape a pore in the host membrane through which the viral genome is translocated into the host cell cytoplasm. In terms of biological role, component of immature procapsids, which is cleaved into capsid proteins VP4 and VP2 after maturation. Allows the capsid to remain inactive before the maturation step. Its function is as follows. Cysteine protease that cleaves viral polyprotein and specific host proteins. It is responsible for the autocatalytic cleavage between the P1 and P2 regions, which is the first cleavage occurring in the polyprotein. Also cleaves the host translation initiation factor EIF4G1, in order to shut down the capped cellular mRNA translation. Inhibits the host nucleus-cytoplasm protein and RNA trafficking by cleaving host members of the nuclear pores. Counteracts stress granule formation probably by antagonizing its assembly or promoting its dissassembly. Plays an essential role in the virus replication cycle by acting as a viroporin. Creates a pore in the host endoplasmic reticulum and as a consequence releases Ca2+ in the cytoplasm of infected cell. In turn, high levels of cytoplasmic calcium may trigger membrane trafficking and transport of viral ER-associated proteins to viroplasms, sites of viral genome replication. Functionally, induces and associates with structural rearrangements of intracellular membranes. Displays RNA-binding, nucleotide binding and NTPase activities. May play a role in virion morphogenesis and viral RNA encapsidation by interacting with the capsid protein VP3. In terms of biological role, localizes the viral replication complex to the surface of membranous vesicles. Together with protein 3CD binds the Cis-Active RNA Element (CRE) which is involved in RNA synthesis initiation. Acts as a cofactor to stimulate the activity of 3D polymerase, maybe through a nucleid acid chaperone activity. Its function is as follows. Localizes the viral replication complex to the surface of membranous vesicles. It inhibits host cell endoplasmic reticulum-to-Golgi apparatus transport and causes the disassembly of the Golgi complex, possibly through GBF1 interaction. This would result in depletion of MHC, trail receptors and IFN receptors at the host cell surface. Plays an essential role in viral RNA replication by recruiting ACBD3 and PI4KB at the viral replication sites, thereby allowing the formation of the rearranged membranous structures where viral replication takes place. Acts as a primer for viral RNA replication and remains covalently bound to viral genomic RNA. VPg is uridylylated prior to priming replication into VPg-pUpU. The oriI viral genomic sequence may act as a template for this. The VPg-pUpU is then used as primer on the genomic RNA poly(A) by the RNA-dependent RNA polymerase to replicate the viral genome. During genome replication, the VPg-RNA linkage is removed by the host TDP2, thereby accelerating replication. During the late stage of the replication cycle, host TDP2 is excluded from sites of viral RNA synthesis and encapsidation, allowing for the generation of progeny virions. Functionally, involved in the viral replication complex and viral polypeptide maturation. It exhibits protease activity with a specificity and catalytic efficiency that is different from protease 3C. Protein 3CD lacks polymerase activity. Protein 3CD binds to the 5'UTR of the viral genome. In terms of biological role, replicates the viral genomic RNA on the surface of intracellular membranes. May form linear arrays of subunits that propagate along a strong head-to-tail interaction called interface-I. Covalently attaches UMP to a tyrosine of VPg, which is used to prime RNA synthesis. The positive stranded RNA genome is first replicated at virus induced membranous vesicles, creating a dsRNA genomic replication form. This dsRNA is then used as template to synthesize positive stranded RNA genomes. ss(+)RNA genomes are either translated, replicated or encapsidated. Its function is as follows. Major viral protease that mediates proteolytic processing of the polyprotein. Cleaves host EIF5B, contributing to host translation shutoff. Also cleaves host PABPC1, contributing to host translation shutoff. Cleaves host NLRP1, triggers host N-glycine-mediated degradation of the autoinhibitory NLRP1 N-terminal fragment. The protein is Genome polyprotein of Homo sapiens (Human).